A 349-amino-acid polypeptide reads, in one-letter code: Cyclic AMP-dependent transcription factor ATF-4 (349 aa).

3 disordered regions span residues 49–75 (FSSDKAGSSEWPAMDDGLASASDTGKE), 204–271 (PPCV…TAKV), and 279–298 (KLKKMEQNKTAATRYRQKKR). Pro60 carries the post-translational modification 4-hydroxyproline. A Phosphothreonine modification is found at Thr212. Residues Ser214, Ser218, Ser223, Ser230, and Ser234 each carry the phosphoserine modification. The BetaTrCP degron motif motif lies at 214-223 (SDNDSGICMS). Residues 229–239 (GSPQHSPSTSR) are compositionally biased toward polar residues. Pro235 carries the post-translational modification 4-hydroxyproline. A Phosphoserine modification is found at Ser247. At Ser251 the chain carries Phosphoserine; by RPS6KA3. Residues Lys258 and Lys270 each participate in a glycyl lysine isopeptide (Lys-Gly) (interchain with G-Cter in SUMO2) cross-link. In terms of domain architecture, bZIP spans 276–339 (LDKKLKKMEQ…QYLKDLIEEV (64 aa)). The basic motif stretch occupies residues 278-298 (KKLKKMEQNKTAATRYRQKKR). An interaction with GABBR1 region spans residues 303–339 (ALTGECKELEKKNEALKEKADSLAKEIQYLKDLIEEV). Residues 304 to 332 (LTGECKELEKKNEALKEKADSLAKEIQYL) are leucine-zipper. Position 309 is an N6-acetyllysine (Lys309).

Belongs to the bZIP family. In terms of assembly, binds DNA as a homodimer and as a heterodimer. Heterodimer; heterodimerizes with CEBPB. Heterodimer; heterodimerizes with DDIT3/CHOP. Interacts with CEP290 (via an N-terminal region). Interacts with NEK6, DAPK2 (isoform 2) and ZIPK/DAPK3. Interacts (via its leucine zipper domain) with GABBR1 and GABBR2 (via their C-termini). Forms a heterodimer with TXLNG in osteoblasts. Interacts (via its DNA binding domain) with FOXO1 (C-terminal half); the interaction occurs in osteoblasts and regulates glucose homeostasis through suppression of beta-cell proliferation and a decrease in insulin production. Interacts with SATB2; the interaction results in enhanced DNA binding and transactivation by these transcription factors. Interacts with ABRAXAS2. Interacts with TRIB3, inhibiting the transactivation activity of ATF4. Interacts with DISC1; which inhibits ATF4 transcription factor activity by disrupting ATF4 dimerization and DNA-binding. Interacts with EP300/p300; EP300/p300 stabilizes ATF4 and increases its transcriptional activity independently of its catalytic activity by preventing its ubiquitination. Ubiquitinated by SCF(BTRC) in response to mTORC1 signal, followed by proteasomal degradation and leading to down-regulate expression of SIRT4. Interaction with EP300/p300 inhibits ubiquitination by SCF(BTRC). Post-translationally, phosphorylation at Ser-251 by RPS6KA3/RSK2 in osteoblasts enhances transactivation activity and promotes osteoblast differentiation. Phosphorylated on the betaTrCP degron motif at Ser-218, followed by phosphorylation at Thr-212, Ser-223, Ser-230, Ser-234 and Ser-247, promoting interaction with BTRC and ubiquitination. Phosphorylation is promoted by mTORC1. Phosphorylation at Ser-214 by CK2 decreases its stability. Phosphorylated by NEK6. In terms of processing, hydroxylated by PHD3, leading to decreased protein stability. As to expression, ubiquitously expressed in adults.

It is found in the nucleus. It localises to the nucleus speckle. The protein localises to the cytoplasm. The protein resides in the cell membrane. Its subcellular location is the cytoskeleton. It is found in the microtubule organizing center. It localises to the centrosome. Transcription factor that binds the cAMP response element (CRE) (consensus: 5'-GTGACGT[AC][AG]-3') and displays two biological functions, as regulator of metabolic and redox processes under normal cellular conditions, and as master transcription factor during integrated stress response (ISR). Binds to asymmetric CRE's as a heterodimer and to palindromic CRE's as a homodimer. Core effector of the ISR, which is required for adaptation to various stress such as endoplasmic reticulum (ER) stress, amino acid starvation, mitochondrial stress or oxidative stress. During ISR, ATF4 translation is induced via an alternative ribosome translation re-initiation mechanism in response to EIF2S1/eIF-2-alpha phosphorylation, and stress-induced ATF4 acts as a master transcription factor of stress-responsive genes in order to promote cell recovery. Promotes the transcription of genes linked to amino acid sufficiency and resistance to oxidative stress to protect cells against metabolic consequences of ER oxidation. Activates the transcription of NLRP1, possibly in concert with other factors in response to ER stress. Activates the transcription of asparagine synthetase (ASNS) in response to amino acid deprivation or ER stress. However, when associated with DDIT3/CHOP, the transcriptional activation of the ASNS gene is inhibited in response to amino acid deprivation. Together with DDIT3/CHOP, mediates programmed cell death by promoting the expression of genes involved in cellular amino acid metabolic processes, mRNA translation and the terminal unfolded protein response (terminal UPR), a cellular response that elicits programmed cell death when ER stress is prolonged and unresolved. Activates the expression of COX7A2L/SCAF1 downstream of the EIF2AK3/PERK-mediated unfolded protein response, thereby promoting formation of respiratory chain supercomplexes and increasing mitochondrial oxidative phosphorylation. Together with DDIT3/CHOP, activates the transcription of the IRS-regulator TRIB3 and promotes ER stress-induced neuronal cell death by regulating the expression of BBC3/PUMA in response to ER stress. May cooperate with the UPR transcriptional regulator QRICH1 to regulate ER protein homeostasis which is critical for cell viability in response to ER stress. In the absence of stress, ATF4 translation is at low levels and it is required for normal metabolic processes such as embryonic lens formation, fetal liver hematopoiesis, bone development and synaptic plasticity. Acts as a regulator of osteoblast differentiation in response to phosphorylation by RPS6KA3/RSK2: phosphorylation in osteoblasts enhances transactivation activity and promotes expression of osteoblast-specific genes and post-transcriptionally regulates the synthesis of Type I collagen, the main constituent of the bone matrix. Cooperates with FOXO1 in osteoblasts to regulate glucose homeostasis through suppression of beta-cell production and decrease in insulin production. Activates transcription of SIRT4. Regulates the circadian expression of the core clock component PER2 and the serotonin transporter SLC6A4. Binds in a circadian time-dependent manner to the cAMP response elements (CRE) in the SLC6A4 and PER2 promoters and periodically activates the transcription of these genes. Mainly acts as a transcriptional activator in cellular stress adaptation, but it can also act as a transcriptional repressor: acts as a regulator of synaptic plasticity by repressing transcription, thereby inhibiting induction and maintenance of long-term memory. Regulates synaptic functions via interaction with DISC1 in neurons, which inhibits ATF4 transcription factor activity by disrupting ATF4 dimerization and DNA-binding. This is Cyclic AMP-dependent transcription factor ATF-4 from Mus musculus (Mouse).